A 346-amino-acid chain; its full sequence is Protein pelota homolog (346 aa).

It belongs to the eukaryotic release factor 1 family. Pelota subfamily. Monomer. Requires a divalent metal cation as cofactor.

It is found in the cytoplasm. Functionally, may function in recognizing stalled ribosomes, interact with stem-loop structures in stalled mRNA molecules, and effect endonucleolytic cleavage of the mRNA. May play a role in the release non-functional ribosomes and degradation of damaged mRNAs. Has endoribonuclease activity. This chain is Protein pelota homolog, found in Ignicoccus hospitalis (strain KIN4/I / DSM 18386 / JCM 14125).